We begin with the raw amino-acid sequence, 131 residues long: Small ribosomal subunit protein eS8 (131 aa).

The disordered stretch occupies residues 1-38 (MKLGAYYKGGDLKKPSGGKKRKVRRTKKKALGGGPPQI). Over residues 16–30 (SGGKKRKVRRTKKKA) the composition is skewed to basic residues.

Belongs to the eukaryotic ribosomal protein eS8 family. In terms of assembly, part of the 30S ribosomal subunit.

This chain is Small ribosomal subunit protein eS8, found in Pyrobaculum arsenaticum (strain DSM 13514 / JCM 11321 / PZ6).